Reading from the N-terminus, the 936-residue chain is Protein NNF2 (936 aa).

Topologically, residues Met1 to Leu41 are lumenal. Lys10 participates in a covalent cross-link: Glycyl lysine isopeptide (Lys-Gly) (interchain with G-Cter in ubiquitin). A helical transmembrane segment spans residues Phe42–Val62. The Cytoplasmic segment spans residues Ala63 to Ser120. A helical transmembrane segment spans residues Phe121–Tyr141. Residues Gly142–Ser245 are Lumenal-facing. A helical membrane pass occupies residues Met246–Pro266. The Cytoplasmic portion of the chain corresponds to His267 to Tyr936. Disordered stretches follow at residues Arg297–Leu351, Gly387–Ser437, and Thr512–His533. Low complexity predominate over residues Ser299 to Ser308. Over residues Leu325 to Leu351 the composition is skewed to polar residues. Low complexity-rich tracts occupy residues Thr394–Thr405 and Ser414–Asn428. Over residues Thr512–Asn529 the composition is skewed to polar residues.

Its subcellular location is the endoplasmic reticulum membrane. The polypeptide is Protein NNF2 (NNF2) (Saccharomyces cerevisiae (strain ATCC 204508 / S288c) (Baker's yeast)).